The sequence spans 555 residues: Urocanate hydratase (555 aa).

Residues 53-54 (GG), Gln-131, 177-179 (GMG), Glu-197, Arg-202, 243-244 (NA), 264-268 (QTSAH), 274-275 (YL), and Tyr-323 each bind NAD(+). Residue Cys-411 is part of the active site. Residue Gly-493 coordinates NAD(+).

This sequence belongs to the urocanase family. It depends on NAD(+) as a cofactor.

It localises to the cytoplasm. It carries out the reaction 4-imidazolone-5-propanoate = trans-urocanate + H2O. It participates in amino-acid degradation; L-histidine degradation into L-glutamate; N-formimidoyl-L-glutamate from L-histidine: step 2/3. In terms of biological role, catalyzes the conversion of urocanate to 4-imidazolone-5-propionate. The polypeptide is Urocanate hydratase (Maricaulis maris (strain MCS10) (Caulobacter maris)).